A 198-amino-acid chain; its full sequence is Peroxiredoxin-2 (198 aa).

N-acetylalanine is present on Ala2. Positions 6-164 (AQIGKSAPDF…ALRLVQAFQY (159 aa)) constitute a Thioredoxin domain. Ser11 carries the phosphoserine modification. Cys51 functions as the Cysteine sulfenic acid (-SOH) intermediate in the catalytic mechanism. Ser112 is subject to Phosphoserine. Thr182 carries the phosphothreonine modification. An N6-acetyllysine modification is found at Lys196.

Belongs to the peroxiredoxin family. AhpC/Prx1 subfamily. As to quaternary structure, homodimer; disulfide-linked, upon oxidation. 5 homodimers assemble to form a ring-like decamer. Interacts with TIPIN. The enzyme can be inactivated by further oxidation of the cysteine sulfenic acid (C(P)-SOH) to sulphinic acid (C(P)-SO2H) instead of its condensation to a disulfide bond. It can be reactivated by forming a transient disulfide bond with sulfiredoxin SRXN1, which reduces the cysteine sulfinic acid in an ATP- and Mg-dependent manner. In terms of processing, acetylation increases resistance to transition to high molecular-mass complexes. Deacetylated by HDAC6 which decreases reducing activity. Widely expressed with highest levels in bone marrow. High levels also found in heart, brain, kidney and skeletal muscle. Lower levels in liver, lung and thymus.

The protein localises to the cytoplasm. The enzyme catalyses a hydroperoxide + [thioredoxin]-dithiol = an alcohol + [thioredoxin]-disulfide + H2O. In terms of biological role, thiol-specific peroxidase that catalyzes the reduction of hydrogen peroxide and organic hydroperoxides to water and alcohols, respectively. Plays a role in cell protection against oxidative stress by detoxifying peroxides and as sensor of hydrogen peroxide-mediated signaling events. Might participate in the signaling cascades of growth factors and tumor necrosis factor-alpha by regulating the intracellular concentrations of H(2)O(2). The chain is Peroxiredoxin-2 (Prdx2) from Mus musculus (Mouse).